The primary structure comprises 302 residues: Nucleotide-binding protein Bmul_0520/BMULJ_02739 (302 aa).

An ATP-binding site is contributed by G8 to S15. GTP is bound at residue D57–S60.

This sequence belongs to the RapZ-like family.

Functionally, displays ATPase and GTPase activities. The chain is Nucleotide-binding protein Bmul_0520/BMULJ_02739 from Burkholderia multivorans (strain ATCC 17616 / 249).